Reading from the N-terminus, the 451-residue chain is Tubulin alpha chain (451 aa).

Q11 is a binding site for GTP. N6-acetyllysine is present on K40. 7 residues coordinate GTP: E71, S140, G144, T145, T179, N206, and N228. Residue E71 coordinates Mg(2+). Residue E254 is part of the active site.

Belongs to the tubulin family. Dimer of alpha and beta chains. A typical microtubule is a hollow water-filled tube with an outer diameter of 25 nm and an inner diameter of 15 nM. Alpha-beta heterodimers associate head-to-tail to form protofilaments running lengthwise along the microtubule wall with the beta-tubulin subunit facing the microtubule plus end conferring a structural polarity. Microtubules usually have 13 protofilaments but different protofilament numbers can be found in some organisms and specialized cells. The cofactor is Mg(2+). Post-translationally, undergoes a tyrosination/detyrosination cycle, the cyclic removal and re-addition of a C-terminal tyrosine residue by the enzymes tubulin tyrosine carboxypeptidase (TTCP) and tubulin tyrosine ligase (TTL), respectively. In terms of processing, acetylation of alpha chains at Lys-40 stabilizes microtubules and affects affinity and processivity of microtubule motors. This modification has a role in multiple cellular functions, ranging from cell motility, cell cycle progression or cell differentiation to intracellular trafficking and signaling. In terms of tissue distribution, actively expressed in the lens but does not seem to be lens-specific.

It localises to the cytoplasm. Its subcellular location is the cytoskeleton. The catalysed reaction is GTP + H2O = GDP + phosphate + H(+). Its function is as follows. Tubulin is the major constituent of microtubules, a cylinder consisting of laterally associated linear protofilaments composed of alpha- and beta-tubulin heterodimers. Microtubules grow by the addition of GTP-tubulin dimers to the microtubule end, where a stabilizing cap forms. Below the cap, tubulin dimers are in GDP-bound state, owing to GTPase activity of alpha-tubulin. The sequence is that of Tubulin alpha chain from Enteroctopus dofleini (North Pacific giant octopus).